A 146-amino-acid chain; its full sequence is Protein archease (146 aa).

Ca(2+) is bound by residues Asp-16, Asp-145, and Ile-146.

The protein belongs to the archease family.

Functionally, activates the tRNA-splicing ligase complex by facilitating the enzymatic turnover of catalytic subunit RtcB. Acts by promoting the guanylylation of RtcB, a key intermediate step in tRNA ligation. Can also alter the NTP specificity of RtcB such that ATP, dGTP or ITP is used efficiently. The sequence is that of Protein archease from Methanosarcina mazei (strain ATCC BAA-159 / DSM 3647 / Goe1 / Go1 / JCM 11833 / OCM 88) (Methanosarcina frisia).